Reading from the N-terminus, the 133-residue chain is Agouti-signaling protein (133 aa).

The first 22 residues, Met1–Ser22, serve as a signal peptide directing secretion. The segment covering Pro26–Leu36 has biased composition (basic and acidic residues). Positions Pro26–Val83 are disordered. Over residues Arg37–Val50 the composition is skewed to polar residues. N-linked (GlcNAc...) asparagine glycans are attached at residues Asn38 and Asn39. A compositionally biased stretch (basic residues) spans Lys70–Ser79. 5 disulfide bridges follow: Cys94–Cys109, Cys101–Cys115, Cys108–Cys126, Cys112–Cys133, and Cys117–Cys124. Residues Cys94–Cys133 form the Agouti domain.

It is found in the secreted. Involved in the regulation of melanogenesis. The binding of ASP to MC1R precludes alpha-MSH initiated signaling and thus blocks production of cAMP, leading to a down-regulation of eumelanogenesis (brown/black pigment) and thus increasing synthesis of pheomelanin (yellow/red pigment). The polypeptide is Agouti-signaling protein (ASIP) (Equus caballus (Horse)).